The sequence spans 278 residues: Orotidine 5'-phosphate decarboxylase (278 aa).

The Proton donor role is filled by Lys-95.

This sequence belongs to the OMP decarboxylase family. Type 2 subfamily.

The catalysed reaction is orotidine 5'-phosphate + H(+) = UMP + CO2. It participates in pyrimidine metabolism; UMP biosynthesis via de novo pathway; UMP from orotate: step 2/2. This is Orotidine 5'-phosphate decarboxylase from Mycobacterium marinum (strain ATCC BAA-535 / M).